Here is a 427-residue protein sequence, read N- to C-terminus: Serine/threonine-protein kinase AFC2 (427 aa).

Positions 98–423 (YKIYSKMGEG…AREALRHPFF (326 aa)) constitute a Protein kinase domain. ATP contacts are provided by residues 104–112 (MGEGTFGQV) and Lys-127. The active-site Proton acceptor is the Asp-223.

This sequence belongs to the protein kinase superfamily. CMGC Ser/Thr protein kinase family. Lammer subfamily.

The catalysed reaction is L-seryl-[protein] + ATP = O-phospho-L-seryl-[protein] + ADP + H(+). It carries out the reaction L-threonyl-[protein] + ATP = O-phospho-L-threonyl-[protein] + ADP + H(+). The enzyme catalyses L-tyrosyl-[protein] + ATP = O-phospho-L-tyrosyl-[protein] + ADP + H(+). The polypeptide is Serine/threonine-protein kinase AFC2 (AFC2) (Arabidopsis thaliana (Mouse-ear cress)).